Reading from the N-terminus, the 547-residue chain is DNA mismatch repair protein MutL (547 aa).

The protein belongs to the DNA mismatch repair MutL/HexB family.

Its function is as follows. This protein is involved in the repair of mismatches in DNA. It is required for dam-dependent methyl-directed DNA mismatch repair. May act as a 'molecular matchmaker', a protein that promotes the formation of a stable complex between two or more DNA-binding proteins in an ATP-dependent manner without itself being part of a final effector complex. In Deinococcus radiodurans (strain ATCC 13939 / DSM 20539 / JCM 16871 / CCUG 27074 / LMG 4051 / NBRC 15346 / NCIMB 9279 / VKM B-1422 / R1), this protein is DNA mismatch repair protein MutL.